The sequence spans 236 residues: Bacterial rhodopsin CSR3 (236 aa).

Topologically, residues 1-3 (MDA) are extracellular. A helical transmembrane segment spans residues 4-25 (VAVVYGITAAGFAVGVAIVGYL). At 26–34 (YASLEGSEE) the chain is on the cytoplasmic side. Residues 35 to 56 (RSILAALALIPGFAGISYVAMA) traverse the membrane as a helical segment. Residues 57–70 (FGIGTVTIGETTLV) are Extracellular-facing. The chain crosses the membrane as a helical span at residues 71 to 92 (GFRYLDWVVTTPLLVGFVGYAA). The Cytoplasmic segment spans residues 93–95 (GAS). Residues 96–118 (RRAIFGVMVADALMILTGVGAVV) form a helical membrane-spanning segment. Topologically, residues 119 to 122 (ADGT) are extracellular. The chain crosses the membrane as a helical span at residues 123 to 150 (LKWVLFGVSTVFHVSLFAYLYLVFPRSV). The Cytoplasmic segment spans residues 151 to 153 (PDD). Residues 154 to 181 (PQRIGLFSLLKNHIGLLWIAYPLVWLAG) traverse the membrane as a helical segment. The Extracellular portion of the chain corresponds to 182–189 (PEGLGLAT). Residues 190–222 (YVGVSITYAFLDLLAKVPYVYFFYARRQVFATK) traverse the membrane as a helical segment. An N6-(retinylidene)lysine modification is found at K205. Residues 223–236 (LLRDSGEVTATPAD) are Cytoplasmic-facing.

The protein belongs to the archaeal/bacterial/fungal opsin family.

It is found in the cell membrane. The sequence is that of Bacterial rhodopsin CSR3 from Haloarcula vallismortis (Halobacterium vallismortis).